We begin with the raw amino-acid sequence, 245 residues long: Enolase-phosphatase E1 (245 aa).

2 residues coordinate Mg(2+): D14 and E16. Substrate-binding positions include S141–S142 and K175. D200 contributes to the Mg(2+) binding site.

It belongs to the HAD-like hydrolase superfamily. MasA/MtnC family. As to quaternary structure, monomer. Requires Mg(2+) as cofactor.

It is found in the cytoplasm. The protein localises to the nucleus. It carries out the reaction 5-methylsulfanyl-2,3-dioxopentyl phosphate + H2O = 1,2-dihydroxy-5-(methylsulfanyl)pent-1-en-3-one + phosphate. It functions in the pathway amino-acid biosynthesis; L-methionine biosynthesis via salvage pathway; L-methionine from S-methyl-5-thio-alpha-D-ribose 1-phosphate: step 3/6. Its pathway is amino-acid biosynthesis; L-methionine biosynthesis via salvage pathway; L-methionine from S-methyl-5-thio-alpha-D-ribose 1-phosphate: step 4/6. Bifunctional enzyme that catalyzes the enolization of 2,3-diketo-5-methylthiopentyl-1-phosphate (DK-MTP-1-P) into the intermediate 2-hydroxy-3-keto-5-methylthiopentenyl-1-phosphate (HK-MTPenyl-1-P), which is then dephosphorylated to form the acireductone 1,2-dihydroxy-3-keto-5-methylthiopentene (DHK-MTPene). In Drosophila grimshawi (Hawaiian fruit fly), this protein is Enolase-phosphatase E1.